We begin with the raw amino-acid sequence, 314 residues long: Acetylglutamate kinase (314 aa).

Residues 76 to 77 (GG), Arg-98, and Asn-199 contribute to the substrate site.

Belongs to the acetylglutamate kinase family. ArgB subfamily.

It is found in the cytoplasm. It carries out the reaction N-acetyl-L-glutamate + ATP = N-acetyl-L-glutamyl 5-phosphate + ADP. Its pathway is amino-acid biosynthesis; L-arginine biosynthesis; N(2)-acetyl-L-ornithine from L-glutamate: step 2/4. Functionally, catalyzes the ATP-dependent phosphorylation of N-acetyl-L-glutamate. The chain is Acetylglutamate kinase from Bifidobacterium longum (strain DJO10A).